The chain runs to 558 residues: Formate--tetrahydrofolate ligase (558 aa).

66 to 73 serves as a coordination point for ATP; the sequence is TPAGEGKT.

This sequence belongs to the formate--tetrahydrofolate ligase family.

It catalyses the reaction (6S)-5,6,7,8-tetrahydrofolate + formate + ATP = (6R)-10-formyltetrahydrofolate + ADP + phosphate. It participates in one-carbon metabolism; tetrahydrofolate interconversion. The sequence is that of Formate--tetrahydrofolate ligase from Neisseria gonorrhoeae (strain ATCC 700825 / FA 1090).